A 172-amino-acid chain; its full sequence is NAD(P)H-quinone oxidoreductase subunit I, chloroplastic (172 aa).

4Fe-4S ferredoxin-type domains are found at residues 55 to 84 and 95 to 124; these read GRIHFEFDKCIACEVCVRVCPIDLPVVDWK and LNYSIDFGICIFCGNCVEYCPTNCLSMTEE. Positions 64, 67, 70, 74, 104, 107, 110, and 114 each coordinate [4Fe-4S] cluster.

Belongs to the complex I 23 kDa subunit family. In terms of assembly, NDH is composed of at least 16 different subunits, 5 of which are encoded in the nucleus. Requires [4Fe-4S] cluster as cofactor.

It localises to the plastid. The protein resides in the chloroplast thylakoid membrane. It carries out the reaction a plastoquinone + NADH + (n+1) H(+)(in) = a plastoquinol + NAD(+) + n H(+)(out). The enzyme catalyses a plastoquinone + NADPH + (n+1) H(+)(in) = a plastoquinol + NADP(+) + n H(+)(out). In terms of biological role, NDH shuttles electrons from NAD(P)H:plastoquinone, via FMN and iron-sulfur (Fe-S) centers, to quinones in the photosynthetic chain and possibly in a chloroplast respiratory chain. The immediate electron acceptor for the enzyme in this species is believed to be plastoquinone. Couples the redox reaction to proton translocation, and thus conserves the redox energy in a proton gradient. This is NAD(P)H-quinone oxidoreductase subunit I, chloroplastic from Arabidopsis thaliana (Mouse-ear cress).